Reading from the N-terminus, the 303-residue chain is UDP-3-O-acyl-N-acetylglucosamine deacetylase (303 aa).

Zn(2+) contacts are provided by H78, H237, and D241. Catalysis depends on H264, which acts as the Proton donor.

The protein belongs to the LpxC family. Requires Zn(2+) as cofactor.

It carries out the reaction a UDP-3-O-[(3R)-3-hydroxyacyl]-N-acetyl-alpha-D-glucosamine + H2O = a UDP-3-O-[(3R)-3-hydroxyacyl]-alpha-D-glucosamine + acetate. It functions in the pathway glycolipid biosynthesis; lipid IV(A) biosynthesis; lipid IV(A) from (3R)-3-hydroxytetradecanoyl-[acyl-carrier-protein] and UDP-N-acetyl-alpha-D-glucosamine: step 2/6. Functionally, catalyzes the hydrolysis of UDP-3-O-myristoyl-N-acetylglucosamine to form UDP-3-O-myristoylglucosamine and acetate, the committed step in lipid A biosynthesis. In Pseudomonas putida (strain GB-1), this protein is UDP-3-O-acyl-N-acetylglucosamine deacetylase.